We begin with the raw amino-acid sequence, 788 residues long: MLNSVKKLLGDSQKRKLKKYEQLVQEINNLEEKLSDLSDEELRHKTITFKDMLRDGKTVDDIKVEAFAVVREAAKRVLGLRHYDVQLIGGLVLLEGNIAEMPTGEGKTLVSSLPTYVRALEGKGVHVITVNDYLAKRDKELIGQVHEFLGLKVGLNIPQIDPSEKKLAYEADITYGIGTEFGFDYLRDNMAASKNEQVQRPYHFAIIDEIDSVLIDEAKTPLIIAGKKSSSSDLHYLCAKVIKSFQDTLHYTYDAESKSASFTEDGITKIEDLFDIDNLYDLEHQTLYHYMIQALRAHVAFQCDVDYIVHDEKILLVDIFTGRVMDGRSLSDGLHQALEAKEGLEITEENQTQASITIQNFFRMYPALSGMTGTAKTEEKEFNRVYNMEVMPIPTNRPIIREDKKDVVYVTADAKYKAVREDVLKHNKQGRPILIGTMSILQSETVARYLDEANITYQLLNAKSAEQEADLIATAGQKGQITIATNMAGRGTDILLGEGVHELGGLHVIGTERHESRRVDNQLKGRAGRQGDPGSSQFFLSLEDEMLKRFAQEEVEKLTKSLKTDETGLILTSKVHDFVNRTQLICEGSHFSMREYNLKLDDVINDQRNVIYKLRNNLLQEDTNMIEIIIPMIDHAVEAISKQYLVEGMLPEEWDFASLTASLNEILSVENMPSLSANNVHSPEDLQSVLKETLSLYKERVNELDSNTDLQQSLRYVALHFLDQNWVNHLDAMTHLKEGIGLRQYQQEDPTRLYQKEALDIFLYTYGNFEKEMCRYVARHLGVPENVQ.

Residues Q86, 104-108 (GEGKT), and D493 each bind ATP.

Belongs to the SecA family. As to quaternary structure, monomer and homodimer. Part of the essential Sec protein translocation apparatus which comprises SecA, SecYEG and auxiliary proteins SecDF. Other proteins may also be involved.

The protein resides in the cell membrane. The protein localises to the cytoplasm. The enzyme catalyses ATP + H2O + cellular proteinSide 1 = ADP + phosphate + cellular proteinSide 2.. Its function is as follows. Part of the Sec protein translocase complex. Interacts with the SecYEG preprotein conducting channel. Has a central role in coupling the hydrolysis of ATP to the transfer of proteins into and across the cell membrane, serving as an ATP-driven molecular motor driving the stepwise translocation of polypeptide chains across the membrane. This chain is Protein translocase subunit SecA 2, found in Bacillus anthracis.